Here is a 134-residue protein sequence, read N- to C-terminus: ATP synthase epsilon chain (134 aa).

It belongs to the ATPase epsilon chain family. F-type ATPases have 2 components, CF(1) - the catalytic core - and CF(0) - the membrane proton channel. CF(1) has five subunits: alpha(3), beta(3), gamma(1), delta(1), epsilon(1). CF(0) has three main subunits: a, b and c.

Its subcellular location is the cell membrane. In terms of biological role, produces ATP from ADP in the presence of a proton gradient across the membrane. The polypeptide is ATP synthase epsilon chain (Staphylococcus aureus (strain USA300)).